Consider the following 164-residue polypeptide: Large ribosomal subunit protein uL10 (164 aa).

This sequence belongs to the universal ribosomal protein uL10 family. As to quaternary structure, part of the ribosomal stalk of the 50S ribosomal subunit. The N-terminus interacts with L11 and the large rRNA to form the base of the stalk. The C-terminus forms an elongated spine to which L12 dimers bind in a sequential fashion forming a multimeric L10(L12)X complex.

Its function is as follows. Forms part of the ribosomal stalk, playing a central role in the interaction of the ribosome with GTP-bound translation factors. The chain is Large ribosomal subunit protein uL10 (rplJ) from Helicobacter pylori (strain ATCC 700392 / 26695) (Campylobacter pylori).